The chain runs to 522 residues: Occludin (522 aa).

The tract at residues 1–20 (MSSRPLESPPPYRPDEFKPN) is disordered. The Cytoplasmic segment spans residues 1–66 (MSSRPLESPP…KWTSPPGVIR (66 aa)). The 210-residue stretch at 60–269 (SPPGVIRILS…IIFFAVKTRR (210 aa)) folds into the MARVEL domain. The chain crosses the membrane as a helical span at residues 67–89 (ILSMLIIVMCIAIFACVASTLAW). At 90 to 135 (DRGYGTSLLGGSVGYPYGGSGFGSYGSGYGYGYGYGYGYGGYTDPR) the chain is on the extracellular side. A helical membrane pass occupies residues 136–160 (AAKGFMLAMAAFCFIAALVIFVTSV). At 161–170 (IRSEMSRTRR) the chain is on the cytoplasmic side. A helical membrane pass occupies residues 171–195 (YYLSVIIVSAILGIMVFIATIVYIM). At 196–243 (GVNPTAQSSGSLYGSQIYALCNQFYTPAATGLYVDQYLYHYCVVDPQE) the chain is on the extracellular side. Cys-216 and Cys-237 are oxidised to a cystine. The chain crosses the membrane as a helical span at residues 244–265 (AIAIVLGFMIIVAFALIIFFAV). The Cytoplasmic portion of the chain corresponds to 266 to 522 (KTRRKMDRYD…MVGDYDRQKT (257 aa)). Ser-302 carries the post-translational modification Phosphoserine. Phosphothreonine is present on Thr-305. Phosphoserine is present on residues Ser-313, Ser-321, and Ser-340. A disordered region spans residues 360–407 (VDDFRQPRYSSGGNFETPSKRAPAKGRAGRSKRTEQDHYETDYTTGGE). Residues 367–376 (RYSSGGNFET) are compositionally biased toward polar residues. Tyr-368 is subject to Phosphotyrosine. Phosphoserine occurs at positions 369 and 370. Over residues 381 to 390 (APAKGRAGRS) the composition is skewed to basic residues. Residues 391–400 (KRTEQDHYET) are compositionally biased toward basic and acidic residues. A phosphotyrosine mark is found at Tyr-398 and Tyr-402. 2 positions are modified to phosphothreonine; by PKC/PRKCH: Thr-403 and Thr-404. Ser-408 bears the Phosphoserine mark. The OCEL domain occupies 414 to 522 (EDWIREYPPI…MVGDYDRQKT (109 aa)). Residues 426–489 (DQQRQLYKRN…EYNRLKQVKG (64 aa)) adopt a coiled-coil conformation. Residue Ser-490 is modified to Phosphoserine.

This sequence belongs to the ELL/occludin family. Interacts with TJP1/ZO1. Interacts with VAPA. Interacts with CLDN1, CLDN6, CLDN9, CLDN11, CLDN12 and CLDN17. Interacts with PLSCR1. Interacts with LSR, ILDR1 and ILDR2. Interacts with TJP2/ZO2. In terms of processing, dephosphorylated by PTPRJ. The tyrosine phosphorylation on Tyr-398 and Tyr-402 reduces its ability to interact with TJP1. Phosphorylation at Ser-490 also attenuates the interaction with TJP1. (Microbial infection) Cleaved by S.pyogenes SpeB protease; leading to its degradation. Degradation by SpeB promotes bacterial translocation across the host epithelial barrier. In terms of tissue distribution, localized at tight junctions of both epithelial and endothelial cells. Highly expressed in kidney. Not detected in testis.

The protein localises to the cell membrane. It localises to the cell junction. Its subcellular location is the tight junction. May play a role in the formation and regulation of the tight junction (TJ) paracellular permeability barrier. It is able to induce adhesion when expressed in cells lacking tight junctions. Its function is as follows. (Microbial infection) Acts as a coreceptor for hepatitis C virus (HCV) in hepatocytes. In Homo sapiens (Human), this protein is Occludin (OCLN).